The chain runs to 45 residues: Photosystem II reaction center protein K (45 aa).

Positions 1-8 are excised as a propeptide; it reads MITAIIIA. A helical membrane pass occupies residues 23 to 43; the sequence is ILPVIPIFFLLLAFVWQAAIG.

Belongs to the PsbK family. PSII is composed of 1 copy each of membrane proteins PsbA, PsbB, PsbC, PsbD, PsbE, PsbF, PsbH, PsbI, PsbJ, PsbK, PsbL, PsbM, PsbT, PsbX, PsbY, PsbZ, Psb30/Ycf12, at least 3 peripheral proteins of the oxygen-evolving complex and a large number of cofactors. It forms dimeric complexes.

The protein resides in the plastid. Its subcellular location is the chloroplast thylakoid membrane. In terms of biological role, one of the components of the core complex of photosystem II (PSII). PSII is a light-driven water:plastoquinone oxidoreductase that uses light energy to abstract electrons from H(2)O, generating O(2) and a proton gradient subsequently used for ATP formation. It consists of a core antenna complex that captures photons, and an electron transfer chain that converts photonic excitation into a charge separation. This chain is Photosystem II reaction center protein K, found in Gracilaria tenuistipitata var. liui (Red alga).